The sequence spans 323 residues: Transcription initiation factor IIB 7 (323 aa).

Basic and acidic residues predominate over residues 1–16 (MTRSTRQRERETAAKQ). The disordered stretch occupies residues 1–35 (MTRSTRQRERETAAKQEEEEDSEEGVRECPECGSD). The TFIIB-type zinc finger occupies 24–56 (EGVRECPECGSDNLVKSSDRAELVCNDCGLVVE). 4 residues coordinate Zn(2+): Cys-29, Cys-32, Cys-48, and Cys-51. A run of 2 repeats spans residues 142–225 (SEID…SQEL) and 236–317 (KYVP…EQIE).

Belongs to the TFIIB family.

Its function is as follows. Stabilizes TBP binding to an archaeal box-A promoter. Also responsible for recruiting RNA polymerase II to the pre-initiation complex (DNA-TBP-TFIIB). This is Transcription initiation factor IIB 7 from Halobacterium salinarum (strain ATCC 700922 / JCM 11081 / NRC-1) (Halobacterium halobium).